We begin with the raw amino-acid sequence, 92 residues long: Acylphosphatase (92 aa).

The Acylphosphatase-like domain maps to 7 to 92 (KTRCTISGRV…DPAPAEFSVG (86 aa)). Active-site residues include R22 and N40.

Belongs to the acylphosphatase family.

It catalyses the reaction an acyl phosphate + H2O = a carboxylate + phosphate + H(+). The sequence is that of Acylphosphatase (acyP) from Halorhodospira halophila (strain DSM 244 / SL1) (Ectothiorhodospira halophila (strain DSM 244 / SL1)).